The primary structure comprises 430 residues: Probable aspartic-type endopeptidase TRV_06366 (430 aa).

Positions 1–17 (MHVSTLLVAVLLPLALS) are cleaved as a signal peptide. Residues 18–87 (KPTPRKKTSS…SKATAGSGKE (70 aa)) constitute a propeptide, activation peptide. The segment at 61–104 (HEMEGYHPQPISKLPGNSKATAGSGKEGVESQDEKGEVVNNPTD) is disordered. Basic and acidic residues predominate over residues 87–104 (EGVESQDEKGEVVNNPTD). A Peptidase A1 domain is found at 109–427 (FLSPVTIGGQ…DQRGPSISLA (319 aa)). Aspartate 125 is an active-site residue. A glycan (N-linked (GlcNAc...) asparagine) is linked at asparagine 306. Residue aspartate 314 is part of the active site.

This sequence belongs to the peptidase A1 family.

Its subcellular location is the secreted. In terms of biological role, probable secreted aspartic-type endopeptidase which contributes to virulence. The sequence is that of Probable aspartic-type endopeptidase TRV_06366 from Trichophyton verrucosum (strain HKI 0517).